The following is a 450-amino-acid chain: Probable cysteine desulfurase, mitochondrial (450 aa).

The N-terminal 52 residues, 1–52 (MNRSILKFVKNGIISSSSRINNNGFINKNNNNRWFATLPQPNRGIAGEKQPI), are a transit peptide targeting the mitochondrion. Pyridoxal 5'-phosphate is bound by residues 120–121 (AT), Asn200, Gln228, and 248–250 (SGH). Lys251 carries the N6-(pyridoxal phosphate)lysine modification. Thr288 contacts pyridoxal 5'-phosphate. Catalysis depends on Cys374, which acts as the Cysteine persulfide intermediate. Position 374 (Cys374) interacts with [2Fe-2S] cluster.

This sequence belongs to the class-V pyridoxal-phosphate-dependent aminotransferase family. NifS/IscS subfamily. It depends on pyridoxal 5'-phosphate as a cofactor.

The protein resides in the mitochondrion. The protein localises to the nucleus. It carries out the reaction (sulfur carrier)-H + L-cysteine = (sulfur carrier)-SH + L-alanine. Functionally, catalyzes the removal of elemental sulfur from cysteine to produce alanine. It supplies the inorganic sulfur for iron-sulfur (Fe-S) clusters. This is Probable cysteine desulfurase, mitochondrial (nfs1) from Dictyostelium discoideum (Social amoeba).